A 225-amino-acid polypeptide reads, in one-letter code: Thymidylate kinase (225 aa).

Position 15–22 (15–22 (GGEGSGKS)) interacts with ATP.

This sequence belongs to the thymidylate kinase family.

The catalysed reaction is dTMP + ATP = dTDP + ADP. Phosphorylation of dTMP to form dTDP in both de novo and salvage pathways of dTTP synthesis. In Protochlamydia amoebophila (strain UWE25), this protein is Thymidylate kinase.